The chain runs to 778 residues: NAD-dependent deacetylase sir2B (778 aa).

ANK repeat units follow at residues 83–112 (LNWTPLHVAVSNKSIEVVTLLLERNIEISI), 114–142 (RYTAFHIAACNGDLNIIEKMITMNRVPNG), 148–178 (DMETSLFLSITNNHFEISEKIMDYYQSSMNS), 191–221 (HGVSPLIMSVLRKNLKMIKKLIEEGDADINS), 225–255 (DNSTSLHCAAIIDFTEAIEYLLDIGGIELMN), 260–289 (YGNSPIHEAAIKGNFKSIQTFINQLKKIII), 317–354 (DGSTPLHLCCNCVNSDNIENNLKSCKVLIEEGGVQVNG), 358–390 (GNATALHILACVGEDKSLPLVKYFLSIGSDPTI), and 394–423 (YGWTPIHQAYNNKNIQIYQLLLDHLKLTNS). The tract at residues 438–458 (SSTSTSSSSSSSSSSSSSSSS) is disordered. Residues 465–778 (KEELKLKGIE…DYFNTLFNSF (314 aa)) enclose the Deacetylase sirtuin-type domain. The active-site Proton acceptor is the histidine 608. Zn(2+) is bound by residues cysteine 616, cysteine 619, cysteine 642, and cysteine 647. Positions 727–746 (KLKQQQENESGESSNDNDNN) are disordered. Residues 733–746 (ENESGESSNDNDNN) show a composition bias toward low complexity.

It belongs to the sirtuin family. Requires Zn(2+) as cofactor.

The catalysed reaction is N(6)-acetyl-L-lysyl-[protein] + NAD(+) + H2O = 2''-O-acetyl-ADP-D-ribose + nicotinamide + L-lysyl-[protein]. In terms of biological role, NAD-dependent deacetylase, which plays an important role in the regulation of transcriptional repression. The chain is NAD-dependent deacetylase sir2B (sir2B) from Dictyostelium discoideum (Social amoeba).